We begin with the raw amino-acid sequence, 206 residues long: Glutathione S-transferase 1 (206 aa).

A GST N-terminal domain is found at Pro-2 to Gly-79. Glutathione contacts are provided by residues Tyr-8, Trp-39, Lys-43, Gly-49–Leu-51, and Gln-63–Ser-64. The 126-residue stretch at Thr-81 to Tyr-206 folds into the GST C-terminal domain.

The protein belongs to the GST superfamily. Sigma family.

The enzyme catalyses RX + glutathione = an S-substituted glutathione + a halide anion + H(+). Functionally, conjugation of reduced glutathione to a wide number of exogenous and endogenous hydrophobic electrophiles. Can also function as a GSH peroxidase. This chain is Glutathione S-transferase 1 (GST1), found in Ascaris suum (Pig roundworm).